A 900-amino-acid polypeptide reads, in one-letter code: Alanine--tRNA ligase (900 aa).

Zn(2+) contacts are provided by His-604, His-608, Cys-708, and His-712.

Belongs to the class-II aminoacyl-tRNA synthetase family. Zn(2+) is required as a cofactor.

It is found in the cytoplasm. It carries out the reaction tRNA(Ala) + L-alanine + ATP = L-alanyl-tRNA(Ala) + AMP + diphosphate. In terms of biological role, catalyzes the attachment of alanine to tRNA(Ala) in a two-step reaction: alanine is first activated by ATP to form Ala-AMP and then transferred to the acceptor end of tRNA(Ala). Also edits incorrectly charged Ser-tRNA(Ala) and Gly-tRNA(Ala) via its editing domain. The sequence is that of Alanine--tRNA ligase from Saccharolobus islandicus (strain L.S.2.15 / Lassen #1) (Sulfolobus islandicus).